Here is a 295-residue protein sequence, read N- to C-terminus: UDP-N-acetylenolpyruvoylglucosamine reductase (295 aa).

Residues 23-188 (QVGGPADFLA…ISAKFALKPG (166 aa)) enclose the FAD-binding PCMH-type domain. The active site involves Arg167. The active-site Proton donor is the Ser217. The active site involves Glu287.

Belongs to the MurB family. Requires FAD as cofactor.

The protein localises to the cytoplasm. The enzyme catalyses UDP-N-acetyl-alpha-D-muramate + NADP(+) = UDP-N-acetyl-3-O-(1-carboxyvinyl)-alpha-D-glucosamine + NADPH + H(+). It functions in the pathway cell wall biogenesis; peptidoglycan biosynthesis. Its function is as follows. Cell wall formation. The sequence is that of UDP-N-acetylenolpyruvoylglucosamine reductase from Streptococcus equi subsp. zooepidemicus (strain H70).